A 598-amino-acid chain; its full sequence is NADH-quinone oxidoreductase subunit C/D (598 aa).

The segment at Met-1–Glu-189 is NADH dehydrogenase I subunit C. The interval Asp-213 to Arg-598 is NADH dehydrogenase I subunit D.

In the N-terminal section; belongs to the complex I 30 kDa subunit family. The protein in the C-terminal section; belongs to the complex I 49 kDa subunit family. As to quaternary structure, NDH-1 is composed of 13 different subunits. Subunits NuoB, CD, E, F, and G constitute the peripheral sector of the complex.

Its subcellular location is the cell inner membrane. The catalysed reaction is a quinone + NADH + 5 H(+)(in) = a quinol + NAD(+) + 4 H(+)(out). Its function is as follows. NDH-1 shuttles electrons from NADH, via FMN and iron-sulfur (Fe-S) centers, to quinones in the respiratory chain. The immediate electron acceptor for the enzyme in this species is believed to be ubiquinone. Couples the redox reaction to proton translocation (for every two electrons transferred, four hydrogen ions are translocated across the cytoplasmic membrane), and thus conserves the redox energy in a proton gradient. The protein is NADH-quinone oxidoreductase subunit C/D of Yersinia pseudotuberculosis serotype O:1b (strain IP 31758).